The following is a 76-amino-acid chain: Small ribosomal subunit protein uS17 (76 aa).

It belongs to the universal ribosomal protein uS17 family. Part of the 30S ribosomal subunit.

In terms of biological role, one of the primary rRNA binding proteins, it binds specifically to the 5'-end of 16S ribosomal RNA. This chain is Small ribosomal subunit protein uS17, found in Ruegeria pomeroyi (strain ATCC 700808 / DSM 15171 / DSS-3) (Silicibacter pomeroyi).